The chain runs to 302 residues: Lysosomal thioesterase PPT2 (302 aa).

Residues 1–27 (MPGLWRQRLPSAWALLLLPFLPLLMPA) form the signal peptide. Asn-60 carries N-linked (GlcNAc...) asparagine glycosylation. Disulfide bonds link Cys-109-Cys-117 and Cys-165-Cys-176. The active-site Nucleophile is Ser-111. Residues Asn-190 and Asn-206 are each glycosylated (N-linked (GlcNAc...) asparagine). Residue Asp-228 is part of the active site. An N-linked (GlcNAc...) asparagine glycan is attached at Asn-245. The cysteines at positions 276 and 296 are disulfide-linked. His-283 is an active-site residue. N-linked (GlcNAc...) asparagine glycosylation occurs at Asn-289.

It belongs to the palmitoyl-protein thioesterase family. As to expression, expressed throughout the brain, primarily in neurons, and at lower levels in glial cells.

The protein localises to the lysosome. The enzyme catalyses hexadecanoyl-CoA + H2O = hexadecanoate + CoA + H(+). The catalysed reaction is S-hexadecanoyl-N-acetylcysteamine + H2O = N-acetylcysteamine + hexadecanoate + H(+). Functionally, catalyzes the cleavage of thioester bonds from S-palmitoyl-CoA or S-palmitoyl-N-acetylcysteamine (unbranched structures) but does not have activity against palmitoylcysteine or palmitoylated proteins, branched structures or bulky head groups. Conversely, hydrolyzes both long and short chain fatty acyl-CoA substrate. This is Lysosomal thioesterase PPT2 (Ppt2) from Mus musculus (Mouse).